Here is a 212-residue protein sequence, read N- to C-terminus: Ribonuclease HII (212 aa).

Residues 20 to 209 form the RNase H type-2 domain; it reads TCIVGVDEVG…VHNILYQEAS (190 aa). Aspartate 26, glutamate 27, and aspartate 117 together coordinate a divalent metal cation.

It belongs to the RNase HII family. Requires Mn(2+) as cofactor. The cofactor is Mg(2+).

It is found in the cytoplasm. The catalysed reaction is Endonucleolytic cleavage to 5'-phosphomonoester.. Functionally, endonuclease that specifically degrades the RNA of RNA-DNA hybrids. The polypeptide is Ribonuclease HII (Cereibacter sphaeroides (strain ATCC 17025 / ATH 2.4.3) (Rhodobacter sphaeroides)).